A 308-amino-acid polypeptide reads, in one-letter code: Aspartate carbamoyltransferase catalytic subunit (308 aa).

Residues Arg-59 and Thr-60 each coordinate carbamoyl phosphate. Lys-87 contributes to the L-aspartate binding site. Carbamoyl phosphate contacts are provided by Arg-109, His-137, and Gln-140. Residues Arg-170 and Arg-224 each contribute to the L-aspartate site. Carbamoyl phosphate is bound by residues Gly-265 and Pro-266.

It belongs to the aspartate/ornithine carbamoyltransferase superfamily. ATCase family. Heterododecamer (2C3:3R2) of six catalytic PyrB chains organized as two trimers (C3), and six regulatory PyrI chains organized as three dimers (R2).

It carries out the reaction carbamoyl phosphate + L-aspartate = N-carbamoyl-L-aspartate + phosphate + H(+). The protein operates within pyrimidine metabolism; UMP biosynthesis via de novo pathway; (S)-dihydroorotate from bicarbonate: step 2/3. Its function is as follows. Catalyzes the condensation of carbamoyl phosphate and aspartate to form carbamoyl aspartate and inorganic phosphate, the committed step in the de novo pyrimidine nucleotide biosynthesis pathway. The sequence is that of Aspartate carbamoyltransferase catalytic subunit from Flavobacterium johnsoniae (strain ATCC 17061 / DSM 2064 / JCM 8514 / BCRC 14874 / CCUG 350202 / NBRC 14942 / NCIMB 11054 / UW101) (Cytophaga johnsonae).